Consider the following 156-residue polypeptide: Persephin (156 aa).

A signal peptide spans 1 to 21 (MAAGRLRILFLLLLSLHLGLG). 3 disulfides stabilise this stretch: cysteine 66-cysteine 124, cysteine 93-cysteine 152, and cysteine 97-cysteine 154.

This sequence belongs to the TGF-beta family. GDNF subfamily. Homodimer; disulfide-linked. Interacts with GFRA4 coreceptor and RET: forms a 2:2:2 ternary complex composed of PSPN ligand, GFRA4 and RET receptor. Expressed at low levels in substantia nigra. Cochlea.

The protein localises to the secreted. In terms of biological role, growth factor that exhibits neurotrophic activity on mesencephalic dopaminergic and motor neurons. Acts by binding to its coreceptor, GFRA4, leading to autophosphorylation and activation of the RET receptor. This is Persephin from Rattus norvegicus (Rat).